A 525-amino-acid chain; its full sequence is GMP synthase [glutamine-hydrolyzing] (525 aa).

Positions 16-205 (PVLVVDFGAQ…LHDFAGLGAD (190 aa)) constitute a Glutamine amidotransferase type-1 domain. The active-site Nucleophile is Cys-93. Residues His-179 and Glu-181 contribute to the active site. The GMPS ATP-PPase domain occupies 206 to 399 (WTAANIAGVL…LGLPEEIVAR (194 aa)). ATP is bound at residue 233–239 (SGGVDSA).

In terms of assembly, homodimer.

It carries out the reaction XMP + L-glutamine + ATP + H2O = GMP + L-glutamate + AMP + diphosphate + 2 H(+). It participates in purine metabolism; GMP biosynthesis; GMP from XMP (L-Gln route): step 1/1. Functionally, catalyzes the synthesis of GMP from XMP. This chain is GMP synthase [glutamine-hydrolyzing], found in Mycolicibacterium paratuberculosis (strain ATCC BAA-968 / K-10) (Mycobacterium paratuberculosis).